The primary structure comprises 244 residues: Carbonic anhydrase (244 aa).

Residues 1–19 (MKGKFSIALMLSACFSASA) form the signal peptide. One can recognise an Alpha-carbonic anhydrase domain in the interval 23-244 (VHWGYEGSGD…QPLNGRIIIH (222 aa)). An intrachain disulfide couples C46 to C199. Residue H84 is the Proton acceptor of the active site. Residues H109, H111, and H128 each contribute to the Zn(2+) site. Substrate is bound at residue 195-196 (TT).

The protein belongs to the alpha-carbonic anhydrase family. Zn(2+) serves as cofactor.

It is found in the periplasm. The catalysed reaction is hydrogencarbonate + H(+) = CO2 + H2O. Functionally, reversible hydration of carbon dioxide. This Pectobacterium atrosepticum (strain SCRI 1043 / ATCC BAA-672) (Erwinia carotovora subsp. atroseptica) protein is Carbonic anhydrase (cah).